A 216-amino-acid chain; its full sequence is Pyrrolidone-carboxylate peptidase (216 aa).

Catalysis depends on residues glutamate 80, cysteine 143, and histidine 168.

Belongs to the peptidase C15 family. In terms of assembly, homotetramer.

The protein resides in the cytoplasm. The enzyme catalyses Release of an N-terminal pyroglutamyl group from a polypeptide, the second amino acid generally not being Pro.. Its function is as follows. Removes 5-oxoproline from various penultimate amino acid residues except L-proline. The chain is Pyrrolidone-carboxylate peptidase from Cupriavidus pinatubonensis (strain JMP 134 / LMG 1197) (Cupriavidus necator (strain JMP 134)).